The chain runs to 211 residues: MQLKNPILGLCQQATFMLSAAKVDQCPDDEGFEVAFAGRSNAGKSSALNTLTHASLARTSKTPGRTQLLNFFGLDEDRRLVDLPGYGYAKVPIPLKLHWQRHLEAYLGSRESLKGLILMMDIRHPMTDFDLLMLDWAIASHMPMHILLTKADKLTYGAAKNTLLKVQAEIRKGWGDAVSIQLFSAPKRMGLEEAYTVLAGWMELEDKAPAE.

An EngB-type G domain is found at 30 to 204; it reads EGFEVAFAGR…YTVLAGWMEL (175 aa). GTP-binding positions include 38–45, 64–68, 82–85, 149–152, and 182–185; these read GRSNAGKS, GRTQL, DLPG, TKAD, and LFSA. Mg(2+)-binding residues include S45 and T66.

Belongs to the TRAFAC class TrmE-Era-EngA-EngB-Septin-like GTPase superfamily. EngB GTPase family. Requires Mg(2+) as cofactor.

Its function is as follows. Necessary for normal cell division and for the maintenance of normal septation. This is Probable GTP-binding protein EngB from Pseudomonas syringae pv. tomato (strain ATCC BAA-871 / DC3000).